Reading from the N-terminus, the 454-residue chain is MADLDVPPQVPQSKTRDLDKLLLRHGNLVDPGFVPGPGLRDDIRDYVRILVIGAGGLGCELLKDLALSGFRNLEVIDMDRIEVTNLNRQFLFRIEDVGKPKAEVAAKRVMERVSGVEIVPHFSRIEDKEIEFYNDFNIIALGLDSIEARKYINGVACGFLEYNEDDTPKRETIKPMVDGGTEGFKGHARVILPGVTPCFECTIYLFPPQVKFPLCTLAETPRNAAHCIEYAHLIQWETVHRGKTFDPDEPEHMKWVYDEAIRRAELFGIPGVTYSLTQGVVKNIIPAIASTNAIISAACALETLKIVSACSKTLVNYLTYNGGEGLYTEVTKFERDTECLVCGPGILIELDTSVTLSKFIEMLEDHPKLLLSKASVKQGENTLYMQAPPVLEEFHRPKLSKPLYDLMGRVQKDTIHVFGQRALKNNEKESCTTKVRVVFKGADGVADMDTAIGA.

Position 2 is an N-acetylalanine (A2). Position 56 to 80 (56 to 80) interacts with ATP; sequence GLGCELLKDLALSGFRNLEVIDMDR. The active-site Glycyl thioester intermediate is the C215.

The protein belongs to the ubiquitin-activating E1 family. UBA3 subfamily. In terms of assembly, heterodimer of UBA3/ECR1 and AXR1. Interacts with NEDD8 and RCE1. In terms of tissue distribution, expressed in shoot, root and floral meristems, in vascular tissues of cotyledons and mature leaves, and in the stele of the root.

Its subcellular location is the nucleus. The catalysed reaction is ATP + [NEDD8 protein] + [E1 NEDD8-activating enzyme]-L-cysteine = AMP + diphosphate + [E1 NEDD8-activating enzyme]-S-[NEDD8 protein]-yl-L-cysteine.. The protein operates within protein modification; protein neddylation. Functionally, catalytic subunit of the dimeric ECR1-AXR1 E1 enzyme. E1 activates NEDD8/RUB1 by first adenylating its C-terminal glycine residue with ATP, thereafter linking this residue to the side chain of the catalytic cysteine, yielding a NEDD8-ECR1 thioester and free AMP. E1 finally transfers NEDD8 to the catalytic cysteine of RCE1. The polypeptide is NEDD8-activating enzyme E1 catalytic subunit (ECR1) (Arabidopsis thaliana (Mouse-ear cress)).